The sequence spans 263 residues: Lysine 5,6-aminomutase beta subunit (263 aa).

Residues 120–259 (EVVMVGASTG…TFILKEMVQR (140 aa)) enclose the B12-binding domain. Residues 130–136 (TDAHTVG) and His133 contribute to the adenosylcob(III)alamin site. N6-(pyridoxal phosphate)lysine is present on Lys144. Adenosylcob(III)alamin is bound by residues 185–192 (LVSQTVTQ), 219–223 (IAGGA), and 239–244 (FGPGKY).

This sequence belongs to the KamE family. As to quaternary structure, heterotetramer of 2 alpha and 2 beta subunits. Adenosylcob(III)alamin is required as a cofactor. It depends on pyridoxal 5'-phosphate as a cofactor.

The enzyme catalyses (3S)-3,6-diaminohexanoate = (3S,5S)-3,5-diaminohexanoate. The catalysed reaction is D-lysine = (2R,5S)-2,5-diaminohexanoate. The protein operates within amino-acid degradation; L-lysine degradation via acetate pathway. In terms of biological role, catalyzes the migration of the L-beta-lysine and D-lysine epsilon amino group to the delta carbon to produce 3,5-diaminohexanoate and 2,5-diaminohexanoate, respectively. The polypeptide is Lysine 5,6-aminomutase beta subunit (Fusobacterium nucleatum subsp. nucleatum (strain ATCC 25586 / DSM 15643 / BCRC 10681 / CIP 101130 / JCM 8532 / KCTC 2640 / LMG 13131 / VPI 4355)).